The chain runs to 824 residues: Ras guanine nucleotide exchange factor I (824 aa).

Disordered regions lie at residues 1-51 (MSNP…KPTK) and 65-167 (GSNL…LILD). Residues 8–41 (SNSTNGSSNSLNGESVSPNRLGSSPGSPISKASS) show a composition bias toward low complexity. A compositionally biased stretch (polar residues) spans 83–95 (NSSVGLLNNSTGS). Residues 104–116 (SSPKSSYILSSSI) show a composition bias toward low complexity. A compositionally biased stretch (gly residues) spans 117 to 128 (GSGGSGGGGGSS). Over residues 136–167 (SASNNSSGPRSRSGSLGKNNSSQQNNNNLILD) the composition is skewed to low complexity. The 33-residue stretch at 223 to 255 (GRDNILQLILQHLQFEGLMDSRKILEEEAKIQY) folds into the LisH domain. Disordered regions lie at residues 330–354 (YVDE…TTAT) and 398–425 (NTQQ…STGT). Basic and acidic residues predominate over residues 331–341 (VDEKDNDKPSK). Over residues 343–354 (SPTTATTTTTAT) the composition is skewed to low complexity. The segment covering 413–425 (LKSTQSITGSTGT) has biased composition (polar residues). Positions 426–551 (LGPQVKAASL…VISDALNSGL (126 aa)) constitute an N-terminal Ras-GEF domain. One can recognise a Ras-GEF domain in the interval 585-816 (DEEEISRQLT…YTRSMSFEPR (232 aa)).

Functionally, promotes the exchange of Ras-bound GDP by GTP. The polypeptide is Ras guanine nucleotide exchange factor I (gefI) (Dictyostelium discoideum (Social amoeba)).